A 335-amino-acid chain; its full sequence is Glycerol-3-phosphate dehydrogenase [NAD(P)+] (335 aa).

Serine 12, tryptophan 13, and lysine 107 together coordinate NADPH. Positions 107, 138, and 140 each coordinate sn-glycerol 3-phosphate. Alanine 142 is an NADPH binding site. The sn-glycerol 3-phosphate site is built by lysine 193, aspartate 246, serine 256, arginine 257, and asparagine 258. Lysine 193 serves as the catalytic Proton acceptor. Arginine 257 is a binding site for NADPH. Residues valine 281 and glutamate 283 each coordinate NADPH.

Belongs to the NAD-dependent glycerol-3-phosphate dehydrogenase family.

The protein resides in the cytoplasm. It carries out the reaction sn-glycerol 3-phosphate + NAD(+) = dihydroxyacetone phosphate + NADH + H(+). The catalysed reaction is sn-glycerol 3-phosphate + NADP(+) = dihydroxyacetone phosphate + NADPH + H(+). It functions in the pathway membrane lipid metabolism; glycerophospholipid metabolism. Catalyzes the reduction of the glycolytic intermediate dihydroxyacetone phosphate (DHAP) to sn-glycerol 3-phosphate (G3P), the key precursor for phospholipid synthesis. This is Glycerol-3-phosphate dehydrogenase [NAD(P)+] from Citrifermentans bemidjiense (strain ATCC BAA-1014 / DSM 16622 / JCM 12645 / Bem) (Geobacter bemidjiensis).